The chain runs to 101 residues: Gamma-secretase subunit PEN-2 (101 aa).

Over 1–17 (MNLERVSNEEKLNLCRK) the chain is Cytoplasmic. An intramembrane region (helical) is located at residues 18–36 (YYLGGFAFLPFLWLVNIFW). The Cytoplasmic segment spans residues 37–57 (FFREAFLAPAYTEQSQIKGYV). The chain crosses the membrane as a helical span at residues 58 to 78 (WRSAVGFLFWVIILATWITIF). Residues 79-101 (QIYRPRWGALGDYLSFTIPLGTP) lie on the Lumenal side of the membrane.

This sequence belongs to the PEN-2 family. In terms of assembly, the functional gamma-secretase complex is composed of at least four polypeptides: a presenilin homodimer (PSEN1 or PSEN2), nicastrin (NCSTN), APH1 (APH1A or APH1B) and PSENEN.

The protein localises to the endoplasmic reticulum membrane. The protein resides in the golgi apparatus. It is found in the golgi stack membrane. Its subcellular location is the cell membrane. It localises to the membrane. Essential subunit of the gamma-secretase complex, an endoprotease complex that catalyzes the intramembrane cleavage of integral membrane proteins such as Notch receptors and APP (amyloid-beta precursor protein). The gamma-secretase complex plays a role in Notch and Wnt signaling cascades and regulation of downstream processes via its role in processing key regulatory proteins, and by regulating cytosolic CTNNB1 levels. PSENEN modulates both endoproteolysis of presenilin and gamma-secretase activity. The polypeptide is Gamma-secretase subunit PEN-2 (Psenen) (Mus musculus (Mouse)).